A 1369-amino-acid chain; its full sequence is Xanthine dehydrogenase (1369 aa).

A 2Fe-2S ferredoxin-type domain is found at 20 to 106 (GEAVVYVNGV…GMHIITVEGI (87 aa)). Residues C58, C63, C66, C88, C128, C131, C164, and C166 each coordinate [2Fe-2S] cluster. The FAD-binding PCMH-type domain occupies 265 to 450 (NGFNGIRWYR…LSVILPWTRP (186 aa)). FAD contacts are provided by residues 293 to 300 (LIIGNSEV), F373, 383 to 387 (SVGGN), D396, L440, and K458. Mo-molybdopterin-binding residues include Q804 and F835. Residues E839 and R917 each contribute to the substrate site. R949 is a Mo-molybdopterin binding site. Substrate contacts are provided by F951 and T1047. Residue A1116 participates in Mo-molybdopterin binding. The active-site Proton acceptor is the E1305.

The protein belongs to the xanthine dehydrogenase family. Homodimer. The cofactor is [2Fe-2S] cluster. FAD is required as a cofactor. Mo-molybdopterin serves as cofactor.

The catalysed reaction is xanthine + NAD(+) + H2O = urate + NADH + H(+). It carries out the reaction hypoxanthine + NAD(+) + H2O = xanthine + NADH + H(+). In terms of biological role, key enzyme involved in purine catabolism. Catalyzes the oxidation of hypoxanthine to xanthine and the oxidation of xanthine to urate. The chain is Xanthine dehydrogenase (XDH) from Oryza sativa subsp. japonica (Rice).